The chain runs to 350 residues: Spermidine/putrescine import ATP-binding protein PotA (350 aa).

The 231-residue stretch at 6 to 236 (LELRNVTKDY…PENLWVAKFI (231 aa)) folds into the ABC transporter domain. 38-45 (GPSGCGKT) is an ATP binding site.

The protein belongs to the ABC transporter superfamily. Spermidine/putrescine importer (TC 3.A.1.11.1) family. In terms of assembly, the complex is composed of two ATP-binding proteins (PotA), two transmembrane proteins (PotB and PotC) and a solute-binding protein (PotD).

It is found in the cell membrane. The catalysed reaction is ATP + H2O + polyamine-[polyamine-binding protein]Side 1 = ADP + phosphate + polyamineSide 2 + [polyamine-binding protein]Side 1.. Its function is as follows. Part of the ABC transporter complex PotABCD involved in spermidine/putrescine import. Responsible for energy coupling to the transport system. The sequence is that of Spermidine/putrescine import ATP-binding protein PotA from Mesoplasma florum (strain ATCC 33453 / NBRC 100688 / NCTC 11704 / L1) (Acholeplasma florum).